We begin with the raw amino-acid sequence, 376 residues long: N-acetyldiaminopimelate deacetylase (376 aa).

D70 is a catalytic residue. Catalysis depends on E129, which acts as the Proton acceptor.

It belongs to the peptidase M20A family. N-acetyldiaminopimelate deacetylase subfamily.

The enzyme catalyses N-acetyl-(2S,6S)-2,6-diaminopimelate + H2O = (2S,6S)-2,6-diaminopimelate + acetate. It participates in amino-acid biosynthesis; L-lysine biosynthesis via DAP pathway; LL-2,6-diaminopimelate from (S)-tetrahydrodipicolinate (acetylase route): step 3/3. Its function is as follows. Catalyzes the conversion of N-acetyl-diaminopimelate to diaminopimelate and acetate. The protein is N-acetyldiaminopimelate deacetylase of Bacillus pumilus (strain SAFR-032).